Here is an 856-residue protein sequence, read N- to C-terminus: MGNRGMEDLIPLVNRLQDAFSAIGQNADLDLPQIAVVGGQSAGKSSVLENFVGRDFLPRGSGIVTRRPLVLQLVNATTEYAEFLHCKGKKFTDFEEVRLEIEAETDRVTGTNKGISPVPINLRVYSPHVLNLTLVDLPGMTKVPVGDQPPDIEFQIRDMLMQFVTKENCLILAVSPANSDLANSDALKVAKEVDPQGQRTIGVITKLDLMDEGTDARDVLENKLLPLRRGYIGVVNRSQKDIDGKKDITAALAAERKFFLSHPSYRHLADRMGTPYLQKVLNQQLTNHIRDTLPGLRNKLQSQLLSIEKEVEEYKNFRPDDPARKTKALLQMVQQFAVDFEKRIEGSGDQIDTYELSGGARINRIFHERFPFELVKMEFDEKELRREISYAIKNIHGIRTGLFTPDLAFEATVKKQVQKLKEPSIKCVDMVVSELTATIRKCSEKLQQYPRLREEMERIVTTHIREREGRTKEQVMLLIDIELAYMNTNHEDFIGFANAQQRSNQMNKKKASGNQDEILVIRKGWLTINNIGIMKGGSKEYWFVLTAENLSWYKDDEEKEKKYMLSVDNLKLRDVEKGFMSSKHIFALFNTEQRNVYKDYRQLELACETQEEVDSWKASFLRAGVYPERVGDKEKASETEENGSDSFMHSMDPQLERQVETIRNLVDSYMAIVNKTVRDLMPKTIMHLMINNTKEFIFSELLANLYSCGDQNTLMEESAEQAQRRDEMLRMYHALKEALSIIGDINTTTVSTPMPPPVDDSWLQVQSVPTGRRSPTSSPTPQRRAPAVPPARPGSRGPAPGPPPAGSALGGAPPVPSRPGASPDPFGPPPQVPSRPNRAPPGVPSQPIGSGKSIPS.

In terms of domain architecture, Dynamin-type G spans Asp-28–Pro-294. Residues Gly-38–Ser-45 form a G1 motif region. Positions 41, 43, 44, 45, 46, 59, and 60 each coordinate GDP. Residues Val-64–Arg-66 form a G2 motif region. Phosphotyrosine is present on Tyr-80. Tyr-125 carries the post-translational modification 3'-nitrotyrosine; alternate. Tyr-125 carries the post-translational modification Phosphotyrosine; alternate. The segment at Asp-136–Gly-139 is G3 motif. The interval Thr-205–Asp-208 is G4 motif. Residues Lys-206, Asp-208, Asp-211, Asn-236, Arg-237, and Gln-239 each coordinate GDP. The tract at residues Val-235–Ser-238 is G5 motif. Phosphoserine is present on residues Ser-306 and Ser-347. Tyr-354 bears the Phosphotyrosine mark. Ser-512 bears the Phosphoserine mark. Positions Leu-519–Val-625 constitute a PH domain. The GED domain maps to Val-659–Val-750. The segment at Val-750–Ser-856 is disordered. Residues Leu-763–Pro-781 are compositionally biased toward polar residues. 2 positions are modified to phosphoserine: Ser-774 and Ser-778. The residue at position 796 (Arg-796) is an Omega-N-methylarginine. A Phosphoserine modification is found at Ser-822. Positions Pro-825–Pro-844 are enriched in pro residues.

It belongs to the TRAFAC class dynamin-like GTPase superfamily. Dynamin/Fzo/YdjA family. Homodimer; homodimerization is mediated by the dynamin-type G domain which promotes assembly-stimulated GTPase activity. Homo-tetramer formed from two dimers in the absence of lipid. Oligomerizes into a helical polymer that self-assembles around the vesicle membrane, when associated to the menbrane through lipid binding. Interacts (via C-terminal proline-rich domain (PRD)) with SNX9 (via SH3 domain); this interaction allows regulation of DNM1 self-assembly during late stages of endocytic vesicle formation and supports DNM1's early functions in accelerating clathrin-coated pits (CCPs) maturation in non neuronals cell. Interacts (via C-terminal proline-rich domain (PRD)) with MYO1E (via SH3 domain); this interaction regulates receptor-mediated endocytosis. Interacts with SNX33 (via SH3 domain); this interaction decreases DNM1-dependent endocytosis. Interacts with DIAPH1. Interacts with GRB2 (via SH3 domain); this interaction mediates disassembly of DNM1 polymers, therefore modulates self-assembly. Forms a complex with BIN1 (via SH3 domain) and SH3GL2 (via SH3 domain). Forms a complex with SH3GL2 (via SH3 domain) and AMPH (via SH3 domain). Forms a complex with SH3GL2 (via SH3 domain) and SYNJ1. Interacts with AMPH. Interacts (via C-terminal proline-rich domain (PRD)) with SYT1; this interaction facilitates vesicle fission during clathrin-mediated endocytosis (CME). Interacts (via C-terminal proline-rich domain (PRD)) with PLCG1 (via SH3 domain); this interaction stimulates the release of GDP from DNM1 and enhances DNM1-dependent endocytosis. Interacts with SNPH; this interaction inhibits the binding of DNM1 to AMPH and DNM1-receptor-mediated endocytosis. Interacts with CAV1. Interacts with SH3GLB1 (via SH3 domain). Interacts with PACSIN1 (via SH3 domain), PACSIN2 (via SH3 domain) and PACSIN3 (via SH3 domain). Interacts with UNC119; this interaction decreases DNM1's GTPase activity and affects DNM1's interaction with AMPH. Interacts with AMPH. Interacts (GTP-bound form) with DNAJC6; this interaction allows clathrin-coated vesicle (CCV) formation at the plasma membrane. In terms of processing, phosphorylation at Ser-774 by GSK3B/GSK3-beta leads to inactivation of receptor-mediated endocytosis in non-neuronal cells. Dephosphorylation at Ser-774, through the EGFR downstream signaling, leads to activation and regulates early stages of clathrin-mediated endocytosis (CME).

The protein localises to the cell membrane. Its subcellular location is the membrane. The protein resides in the clathrin-coated pit. It is found in the cytoplasmic vesicle. It localises to the presynapse. The protein localises to the secretory vesicle. Its subcellular location is the chromaffin granule. It carries out the reaction GTP + H2O = GDP + phosphate + H(+). Functionally, catalyzes the hydrolysis of GTP and utilizes this energy to mediate vesicle scission and participates in many forms of endocytosis, such as clathrin-mediated endocytosis or synaptic vesicle endocytosis as well as rapid endocytosis (RE). Associates to the membrane, through lipid binding, and self-assembles into rings and stacks of interconnected rings through oligomerization to form a helical polymer around the vesicle membrane leading to constriction of invaginated coated pits around their necks. Self-assembly of the helical polymer induces membrane tubules narrowing until the polymer reaches a length sufficient to trigger GTP hydrolysis. Depending on the curvature imposed on the tubules, membrane detachment from the helical polymer upon GTP hydrolysis can cause spontaneous hemifission followed by complete fission. May play a role in regulating early stages of clathrin-mediated endocytosis in non-neuronal cells through its activation by dephosphorylation via the signaling downstream of EGFR. Controls vesicle size at a step before fission, during formation of membrane pits, at hippocampal synapses. Controls plastic adaptation of the synaptic vesicle recycling machinery to high levels of activity. Mediates rapid endocytosis (RE), a Ca(2+)-dependent and clathrin- and K(+)-independent process in chromaffin cells. Microtubule-associated force-producing protein involved in producing microtubule bundles and able to bind and hydrolyze GTP. Through its interaction with DNAJC6, acts during the early steps of clathrin-coated vesicle (CCV) formation. The sequence is that of Dynamin-1 from Bos taurus (Bovine).